An 84-amino-acid chain; its full sequence is UPF0410 protein YmgE (84 aa).

The next 3 membrane-spanning stretches (helical) occupy residues 1–21, 27–47, and 58–78; these read MGII…KLIM, GGFF…GWLA, and GFNL…LGIF.

The protein belongs to the UPF0410 family.

The protein resides in the cell inner membrane. The polypeptide is UPF0410 protein YmgE (ymgE) (Escherichia coli (strain K12)).